The sequence spans 302 residues: MIPNNTKFSNPLFGRILTAMVTPFKKNGAVDYELAIKLSNYLCENGSDGIVLCGTTGESPTLTWAEQHNLFVAVKGSLNSRSKVIVGTGSNCTSEAIEATQKAYEFGADGALVVVPYYNKPPQEGLYKHFSSIANAASDLPLMLYNIPGRTGCNLLPTTVNKLMNFPNILSIKAASGRIEEVTELRAACGSKLSIYSGDDSLLLPMLSVGAVGVVSVASHIVGLQLKTMIESFQKGEISIALDIHEKLQPLFKALFETTNPIPIKAALELRGWQVGSPRNPLTPLIKEKRESLLQIIQNLSL.

Position 56 (T56) interacts with pyruvate. Y145 acts as the Proton donor/acceptor in catalysis. K173 (schiff-base intermediate with substrate) is an active-site residue. Pyruvate is bound at residue V215.

It belongs to the DapA family. Homotetramer; dimer of dimers.

The protein resides in the cytoplasm. The catalysed reaction is L-aspartate 4-semialdehyde + pyruvate = (2S,4S)-4-hydroxy-2,3,4,5-tetrahydrodipicolinate + H2O + H(+). It participates in amino-acid biosynthesis; L-lysine biosynthesis via DAP pathway; (S)-tetrahydrodipicolinate from L-aspartate: step 3/4. Functionally, catalyzes the condensation of (S)-aspartate-beta-semialdehyde [(S)-ASA] and pyruvate to 4-hydroxy-tetrahydrodipicolinate (HTPA). This is 4-hydroxy-tetrahydrodipicolinate synthase from Prochlorococcus marinus subsp. pastoris (strain CCMP1986 / NIES-2087 / MED4).